A 352-amino-acid polypeptide reads, in one-letter code: Rhodopsin (352 aa).

Topologically, residues 1-36 (MNGTEGPYFYVPMSNATGVVRSPYEYPQYYLAPPWA) are extracellular. 2 N-linked (GlcNAc...) asparagine glycosylation sites follow: Asn2 and Asn15. A helical transmembrane segment spans residues 37–61 (YACLAAYMFFLILVGFPVNFLTLYV). The Cytoplasmic portion of the chain corresponds to 62-73 (TIEHKKLRTPLN). The chain crosses the membrane as a helical span at residues 74–96 (YILLNLAVADLFMVFGGFTTTMY). The Extracellular segment spans residues 97 to 110 (TSLNGYFVFGRLGC). Cys110 and Cys187 are joined by a disulfide. Residues 111 to 133 (NLEGFFATFGGINSLWCLVVLSI) traverse the membrane as a helical segment. A 'Ionic lock' involved in activated form stabilization motif is present at residues 134–136 (ERW). Over 134–152 (ERWVVVCKPMSNFRFGENH) the chain is Cytoplasmic. A helical membrane pass occupies residues 153–173 (AIMGVAFTWFMALACTVPPLV). Over 174–202 (GWSRYIPEGMQCSCGIDYYTRAEGFNNES) the chain is Extracellular. A helical transmembrane segment spans residues 203-224 (FVIYMFVVHFLTPLFVITFCYG). The Cytoplasmic portion of the chain corresponds to 225 to 252 (RLVCTVKEAAAQQQESETTQRAEREVTR). The helical transmembrane segment at 253 to 274 (MVILMFIAYLVCWLPYASVSWW) threads the bilayer. Residues 275–286 (IFTNQGSEFGPI) are Extracellular-facing. The chain crosses the membrane as a helical span at residues 287-308 (FMTVPAFFAKSSSIYNPVIYIC). Lys296 is modified (N6-(retinylidene)lysine). Topologically, residues 309 to 352 (LNKQFRHCMITTLCCGKNPFEEEEGASTTASKTEASSVSSVSPA) are cytoplasmic. S-palmitoyl cysteine attachment occurs at residues Cys322 and Cys323. Residues 331–352 (EEGASTTASKTEASSVSSVSPA) are disordered. Residues 334-352 (ASTTASKTEASSVSSVSPA) are compositionally biased toward low complexity.

Belongs to the G-protein coupled receptor 1 family. Opsin subfamily. In terms of processing, phosphorylated on some or all of the serine and threonine residues present in the C-terminal region. Post-translationally, contains one covalently linked retinal chromophore.

Its subcellular location is the membrane. It localises to the cell projection. It is found in the cilium. The protein localises to the photoreceptor outer segment. Its function is as follows. Photoreceptor required for image-forming vision at low light intensity. While most salt water fish species use retinal as chromophore, most freshwater fish use 3-dehydroretinal, or a mixture of retinal and 3-dehydroretinal. Light-induced isomerization of 11-cis to all-trans retinal triggers a conformational change that activates signaling via G-proteins. Subsequent receptor phosphorylation mediates displacement of the bound G-protein alpha subunit by arrestin and terminates signaling. The sequence is that of Rhodopsin (rho) from Psalidodon fasciatus (Banded astyanax).